The following is a 393-amino-acid chain: Pyridinium-3,5-bisthiocarboxylic acid mononucleotide nickel insertion protein (393 aa).

The protein belongs to the LarC family.

It catalyses the reaction Ni(II)-pyridinium-3,5-bisthiocarboxylate mononucleotide = pyridinium-3,5-bisthiocarboxylate mononucleotide + Ni(2+). Involved in the biosynthesis of a nickel-pincer cofactor ((SCS)Ni(II) pincer complex). Binds Ni(2+), and functions in nickel delivery to pyridinium-3,5-bisthiocarboxylic acid mononucleotide (P2TMN), to form the mature cofactor. Is thus probably required for the activation of nickel-pincer cofactor-dependent enzymes. In Nocardioides sp. (strain ATCC BAA-499 / JS614), this protein is Pyridinium-3,5-bisthiocarboxylic acid mononucleotide nickel insertion protein.